The chain runs to 202 residues: Putative transmembrane protein ORF202 (202 aa).

Helical transmembrane passes span 13–33 (AIAF…FHYI), 40–60 (VFYL…LFLG), 87–107 (YYPV…ISVF), 156–176 (YGAL…HSLS), and 177–197 (LTAF…DLWA).

Its subcellular location is the host membrane. This is Putative transmembrane protein ORF202 from Acidianus filamentous virus 2 (isolate Italy/Pozzuoli) (AFV-2).